A 75-amino-acid polypeptide reads, in one-letter code: U9-theraphotoxin-Cg1a (75 aa).

The N-terminal stretch at Met-1 to Ala-21 is a signal peptide. A propeptide spanning residues Asn-22–Arg-29 is cleaved from the precursor. 3 disulfide bridges follow: Cys-31–Cys-46, Cys-38–Cys-51, and Cys-45–Cys-58.

The protein belongs to the neurotoxin 10 (Hwtx-1) family. 43 (Jztx-49) subfamily. Expressed by the venom gland.

Its subcellular location is the secreted. Probable ion channel inhibitor. The chain is U9-theraphotoxin-Cg1a from Chilobrachys guangxiensis (Chinese earth tiger tarantula).